Here is a 1025-residue protein sequence, read N- to C-terminus: Adenylate-forming reductase 03009 (1025 aa).

Residues 38–422 form an adenylation (A) domain region; the sequence is FEFHAKSNPQ…LGRIDNQVKI (385 aa). Residues 332–333 and 412–415 contribute to the AMP site; these read VT and HLGR. Residues 556-638 form a thiolation and peptide carrier (T) domain region; the sequence is SLGSTNTKIS…AILIWICVKK (83 aa). A thioester reductase (TR) domain region spans residues 682 to 900; it reads FIRRTAARVY…PPTKLWVKGV (219 aa). NADP(+) is bound by residues 685–688, 769–771, and tyrosine 840; these read RTAA and SAL.

The protein belongs to the adenylate-forming reductase family.

In terms of biological role, adenylate-forming reductase, a natural product biosynthesis enzyme that resembles non-ribosomal peptide synthetases, yet serves to modify one substrate, rather than to condense two or more building blocks. The A-domain preferentially accepts L-serine, L-alanine and L-valine as substrates. The natural product of the enzyme is not yet known. The protein is Adenylate-forming reductase 03009 of Coprinopsis cinerea (strain Okayama-7 / 130 / ATCC MYA-4618 / FGSC 9003) (Inky cap fungus).